The chain runs to 738 residues: Protostadienol synthase A (738 aa).

The stretch at lysine 132–glycine 173 is one PFTB 1 repeat. Aspartate 463 functions as the Proton donor in the catalytic mechanism. 3 PFTB repeats span residues leucine 490 to valine 531, valine 567 to glycine 607, and cysteine 616 to glycine 663.

Belongs to the terpene cyclase/mutase family.

The enzyme catalyses (S)-2,3-epoxysqualene = (17Z)-protosta-17(20),24-dien-3beta-ol. In terms of biological role, protostadienol synthase which cyclizes (3S)-oxidosqualene to (17Z)-protosta-17(20),24-dien-3-beta-ol (protostadienol), the biosynthetic precursor of helvolic acid, a secondary metabolite which promotes virulence. This chain is Protostadienol synthase A (pdsA), found in Neosartorya fischeri (strain ATCC 1020 / DSM 3700 / CBS 544.65 / FGSC A1164 / JCM 1740 / NRRL 181 / WB 181) (Aspergillus fischerianus).